A 178-amino-acid chain; its full sequence is MRVLGIDPGSRITGYGLVEQHGSRLVHLDNGAVFTDKAKDFPDRLRLIFEGLSRVIAEYAPDAVAVEDVYVSENVRAALKLGQARGAAIAAAVHAGLPVFEYTASQVKQAVVGQGRAGKEQVQKMVKALLGLPEIAQADASDAVAVAICHINSYQLRLQAGPAVATSRRASSWRNYRP.

Residues Asp-7, Glu-67, and Asp-139 contribute to the active site. Positions 7, 67, and 139 each coordinate Mg(2+).

This sequence belongs to the RuvC family. In terms of assembly, homodimer which binds Holliday junction (HJ) DNA. The HJ becomes 2-fold symmetrical on binding to RuvC with unstacked arms; it has a different conformation from HJ DNA in complex with RuvA. In the full resolvosome a probable DNA-RuvA(4)-RuvB(12)-RuvC(2) complex forms which resolves the HJ. Mg(2+) serves as cofactor.

The protein resides in the cytoplasm. The enzyme catalyses Endonucleolytic cleavage at a junction such as a reciprocal single-stranded crossover between two homologous DNA duplexes (Holliday junction).. Its function is as follows. The RuvA-RuvB-RuvC complex processes Holliday junction (HJ) DNA during genetic recombination and DNA repair. Endonuclease that resolves HJ intermediates. Cleaves cruciform DNA by making single-stranded nicks across the HJ at symmetrical positions within the homologous arms, yielding a 5'-phosphate and a 3'-hydroxyl group; requires a central core of homology in the junction. The consensus cleavage sequence is 5'-(A/T)TT(C/G)-3'. Cleavage occurs on the 3'-side of the TT dinucleotide at the point of strand exchange. HJ branch migration catalyzed by RuvA-RuvB allows RuvC to scan DNA until it finds its consensus sequence, where it cleaves and resolves the cruciform DNA. In Trichlorobacter lovleyi (strain ATCC BAA-1151 / DSM 17278 / SZ) (Geobacter lovleyi), this protein is Crossover junction endodeoxyribonuclease RuvC.